The primary structure comprises 64 residues: Large ribosomal subunit protein eL24 (64 aa).

Zn(2+) contacts are provided by cysteine 6, cysteine 9, cysteine 32, and cysteine 36. The C4-type zinc finger occupies 6–36; that stretch reads CNFCGKSIEPGTGKKFVKKDGSVMFICSSKC.

The protein belongs to the eukaryotic ribosomal protein eL24 family. In terms of assembly, part of the 50S ribosomal subunit. Forms a cluster with proteins L3 and L14. The cofactor is Zn(2+).

Functionally, binds to the 23S rRNA. The sequence is that of Large ribosomal subunit protein eL24 from Methanococcus aeolicus (strain ATCC BAA-1280 / DSM 17508 / OCM 812 / Nankai-3).